The chain runs to 396 residues: Elongation factor Tu (396 aa).

Residues 10-206 (KPHVNVGTIG…ALDTYIPEPE (197 aa)) enclose the tr-type G domain. Residues 19–26 (GHVDHGKT) form a G1 region. 19-26 (GHVDHGKT) contacts GTP. Thr26 is a binding site for Mg(2+). The interval 60 to 64 (GITIN) is G2. The tract at residues 81–84 (DCPG) is G3. GTP contacts are provided by residues 81–85 (DCPGH) and 136–139 (NKAD). The G4 stretch occupies residues 136 to 139 (NKAD). The interval 174-176 (SAL) is G5.

This sequence belongs to the TRAFAC class translation factor GTPase superfamily. Classic translation factor GTPase family. EF-Tu/EF-1A subfamily. As to quaternary structure, monomer.

The protein localises to the cytoplasm. It carries out the reaction GTP + H2O = GDP + phosphate + H(+). In terms of biological role, GTP hydrolase that promotes the GTP-dependent binding of aminoacyl-tRNA to the A-site of ribosomes during protein biosynthesis. The polypeptide is Elongation factor Tu (Thiobacillus denitrificans (strain ATCC 25259 / T1)).